Reading from the N-terminus, the 328-residue chain is Diacetylchitobiose uptake system permease protein DasB (328 aa).

Positions 1–27 (MTVQTERPPSGPSDVRKADGGGTGGTR) are disordered. Helical transmembrane passes span 36–56 (ALAPYLLLLPAAAATVLLLGW), 104–124 (IIFTAVNVVLTMVVGGLIGLL), 134–154 (FVLMIGLVLAWAMPVVAATTV), 188–208 (FSTFFVVTVLIVWMSVPFVAI), 247–267 (FLYATTFLEVIWIFKAFVQVY), and 297–317 (MGAAIAVLTILILLGLTAYYL). The ABC transmembrane type-1 domain occupies 100–316 (TVRSIIFTAV…LILLGLTAYY (217 aa)).

The protein belongs to the binding-protein-dependent transport system permease family. In terms of assembly, the complex is composed of two ATP-binding proteins (MsiK), two transmembrane proteins (DasB and DasC) and a solute-binding protein (DasA).

It is found in the cell membrane. Part of the ABC transporter complex DasABC-MsiK involved in N,N'-diacetylchitobiose ((GlcNAc)2) uptake. Responsible for the translocation of the substrate across the membrane. The chain is Diacetylchitobiose uptake system permease protein DasB from Streptomyces coelicolor (strain ATCC BAA-471 / A3(2) / M145).